A 629-amino-acid chain; its full sequence is Protein fem-1 homolog B (629 aa).

6 ANK repeats span residues 47-77 (QRST…DVQQ), 89-118 (DGAT…NVNH), 122-151 (TNST…NISI), 155-184 (YDNT…DPNA), 188-217 (CGAT…AMVV), and 220-250 (HGMT…DAKS). The TPR repeat unit spans residues 346–379 (SHPIIYRGAVYADNMQFEQCIKLWLHALQLRQKG). ANK repeat units lie at residues 485 to 529 (EGGS…NVNA) and 533 to 570 (MGNS…HTDM).

The protein belongs to the fem-1 family. In terms of assembly, component of a CRL2 E3 ubiquitin-protein ligase complex, also named ECS (Elongin BC-CUL2/5-SOCS-box protein) complex.

It localises to the cytoplasm. The protein resides in the nucleus. It functions in the pathway protein modification; protein ubiquitination. Its function is as follows. Substrate-recognition component of a Cul2-RING (CRL2) E3 ubiquitin-protein ligase complex of the DesCEND (destruction via C-end degrons) pathway, which recognizes a C-degron located at the extreme C terminus of target proteins, leading to their ubiquitination and degradation. The C-degron recognized by the DesCEND pathway is usually a motif of less than ten residues and can be present in full-length proteins, truncated proteins or proteolytically cleaved forms. The CRL2(FEM1B) complex specifically recognizes proteins ending with -Gly-Leu-Asp-Arg, leading to their ubiquitination and degradation. In Xenopus laevis (African clawed frog), this protein is Protein fem-1 homolog B.